We begin with the raw amino-acid sequence, 100 residues long: Small ribosomal subunit protein uS14c (100 aa).

The protein belongs to the universal ribosomal protein uS14 family. Part of the 30S ribosomal subunit.

It is found in the plastid. Its subcellular location is the chloroplast. Its function is as follows. Binds 16S rRNA, required for the assembly of 30S particles. The chain is Small ribosomal subunit protein uS14c from Angiopteris evecta (Mule's foot fern).